Consider the following 440-residue polypeptide: SCRYFLAEWGRKEIELAENEMPGLISCRRNMRFKPLRVQIAGCLHMTIQTAVLIETLVELGAEVTWSSCNIFSTQDHAAAAIAASGISVFAWKGETEEEYLWCIETQLTSFKDGKHLNMILDDGGDVTSLVHNKYPDYLKNCKGISEETTTGVHQFYKMLKEGKLKVPAINVNDSVTKSKFDNLYGVSLVLIYKIISNIKLRCRESLIDGIKRATDIMIAAKVAIVAGFGDVGKGCAKALRGMGARVIITEIDPIVALQASMEGYQVAVMEEVADQADIFVTATGCKDIICERHFEAMKNDAIICNIGHFDVEIDVAWLIKKCSSISNIKPQVDRYLLGNGRNIILLAEGRLVNLGCATGHSSMVMSMSFTNQVLAQIALWTAQEGQYPLGVHFLPKKLDEEVARLHLSKLGKLTSLTPEQSAYLDIPIDGPYKSEHYRY.

Residues threonine 47, aspartate 123, and glutamate 148 each coordinate substrate. 149-151 (TTT) is a binding site for NAD(+). Residues lysine 178 and aspartate 182 each contribute to the substrate site. Residues asparagine 183, 228 to 233 (GFGDVG), glutamate 251, 307 to 309 (IGH), and asparagine 354 contribute to the NAD(+) site.

The protein belongs to the adenosylhomocysteinase family. NAD(+) serves as cofactor.

It carries out the reaction S-adenosyl-L-homocysteine + H2O = L-homocysteine + adenosine. The protein operates within amino-acid biosynthesis; L-homocysteine biosynthesis; L-homocysteine from S-adenosyl-L-homocysteine: step 1/1. Its function is as follows. Adenosylhomocysteine is a competitive inhibitor of S-adenosyl-L-methionine-dependent methyl transferase reactions; therefore adenosylhomocysteinase may play a key role in the control of methylations via regulation of the intracellular concentration of adenosylhomocysteine. This is Adenosylhomocysteinase (SAHH) from Pneumocystis carinii.